The chain runs to 282 residues: Light-independent protochlorophyllide reductase iron-sulfur ATP-binding protein (282 aa).

ATP-binding positions include 10–15 and K39; that span reads GIGKST. S14 provides a ligand contact to Mg(2+). [4Fe-4S] cluster is bound by residues C95 and C129. An ATP-binding site is contributed by 180 to 181; it reads NR.

It belongs to the NifH/BchL/ChlL family. In terms of assembly, homodimer. Protochlorophyllide reductase is composed of three subunits; ChlL, ChlN and ChlB. Requires [4Fe-4S] cluster as cofactor.

It localises to the plastid. The protein localises to the cyanelle. It catalyses the reaction chlorophyllide a + oxidized 2[4Fe-4S]-[ferredoxin] + 2 ADP + 2 phosphate = protochlorophyllide a + reduced 2[4Fe-4S]-[ferredoxin] + 2 ATP + 2 H2O. Its pathway is porphyrin-containing compound metabolism; chlorophyll biosynthesis (light-independent). Functionally, component of the dark-operative protochlorophyllide reductase (DPOR) that uses Mg-ATP and reduced ferredoxin to reduce ring D of protochlorophyllide (Pchlide) to form chlorophyllide a (Chlide). This reaction is light-independent. The L component serves as a unique electron donor to the NB-component of the complex, and binds Mg-ATP. The protein is Light-independent protochlorophyllide reductase iron-sulfur ATP-binding protein of Cyanophora paradoxa.